The following is a 181-amino-acid chain: Inner membrane-spanning protein YciB (181 aa).

5 helical membrane passes run 10-30, 50-70, 80-100, 120-140, and 148-168; these read LIIF…GALI, MQLI…ALHD, IVYV…KPAI, WAWV…AYHL, and FKVF…GGYI.

It belongs to the YciB family.

It is found in the cell inner membrane. Plays a role in cell envelope biogenesis, maintenance of cell envelope integrity and membrane homeostasis. The protein is Inner membrane-spanning protein YciB of Vibrio cholerae serotype O1 (strain ATCC 39541 / Classical Ogawa 395 / O395).